The chain runs to 440 residues: Protein arginine N-methyltransferase 2 (440 aa).

A disordered region spans residues 147–194 (LSSGSEDGDEEMEVQQDDDEEAPQLVSTEDVEPTVEEPKFIPPDAKEK). Over residues 152–168 (EDGDEEMEVQQDDDEEA) the composition is skewed to acidic residues. Residues 182–194 (EEPKFIPPDAKEK) show a composition bias toward basic and acidic residues. The 249-residue stretch at 192 to 440 (KEKQVTSEEY…RYAVGTSNRL (249 aa)) folds into the RMT2 domain. S-adenosyl-L-methionine is bound by residues Tyr-201, Met-230, 252–257 (FGMGIV), 273–275 (EAH), 310–311 (WQ), and Asp-330.

It belongs to the class I-like SAM-binding methyltransferase superfamily. RMT2 methyltransferase family. In terms of assembly, monomer.

It localises to the cytoplasm. Its subcellular location is the nucleus. Its function is as follows. S-adenosyl-L-methionine-dependent protein-arginine N-methyltransferase that methylates the delta-nitrogen atom of arginine residues to form N5-methylarginine (type IV) in target proteins. Monomethylates ribosomal protein L12. In Gibberella zeae (strain ATCC MYA-4620 / CBS 123657 / FGSC 9075 / NRRL 31084 / PH-1) (Wheat head blight fungus), this protein is Protein arginine N-methyltransferase 2.